Reading from the N-terminus, the 320-residue chain is MKIIFAGTPEFAATALAALLKTSHEIIAVYTQPDRKAGRGQKLTPSPVKQLVLEYNIPVYQPLHFKASTEEGLAAQQELAALGADVMVVAAYGLILPQAVLDTPKYGCLNIHGSLLPRWRGAAPIQRAIATGDDETGITIMQMAAGLDTGDMMYKTYCPITSEDTSATLHDKLAAQGATAICAVLESEETLQKYLAEREVQDESLTVYAHKLVKSEARIDWSMNAVQVDRNIRAFNPWPVAFIQLDENNALRVWYSTISNQNKADAKAGEIIAIDKQGVHVACGENTFICLTSVQWPGGKALNAQQIAQTQKLHVGQILP.

Residue Ser114–Pro117 participates in (6S)-5,6,7,8-tetrahydrofolate binding.

It belongs to the Fmt family.

It catalyses the reaction L-methionyl-tRNA(fMet) + (6R)-10-formyltetrahydrofolate = N-formyl-L-methionyl-tRNA(fMet) + (6S)-5,6,7,8-tetrahydrofolate + H(+). Functionally, attaches a formyl group to the free amino group of methionyl-tRNA(fMet). The formyl group appears to play a dual role in the initiator identity of N-formylmethionyl-tRNA by promoting its recognition by IF2 and preventing the misappropriation of this tRNA by the elongation apparatus. The protein is Methionyl-tRNA formyltransferase of Acinetobacter baumannii (strain SDF).